We begin with the raw amino-acid sequence, 335 residues long: Taste receptor type 2 member 119 (335 aa).

The Extracellular portion of the chain corresponds to 1 to 7 (MMEGHIL). The helical transmembrane segment at 8 to 28 (FFFLVVMVQFVTGVLANGLIV) threads the bilayer. The Cytoplasmic segment spans residues 29–43 (VVHAIDLIMWKKMAP). A helical membrane pass occupies residues 44–64 (LDLLLFCLATSRIILQLCILF). The Extracellular portion of the chain corresponds to 65-81 (AQLCLFSLVRHTLFEDN). Residue N81 is glycosylated (N-linked (GlcNAc...) asparagine). The chain crosses the membrane as a helical span at residues 82–102 (ITFVFIINELSLWFATWLGVF). Residues 103-124 (YCAKIATIPHPLFLWLKMRISR) lie on the Cytoplasmic side of the membrane. The chain crosses the membrane as a helical span at residues 125–145 (LVPWLILGSVLYVIITTFIHS). Over 146–176 (RETSAILKPIFISLFPKNATQVGTGHATLLS) the chain is Extracellular. N-linked (GlcNAc...) asparagine glycosylation is present at N163. The helical transmembrane segment at 177–197 (VLVLGLTLPLFIFTVAVLLLI) threads the bilayer. The Cytoplasmic segment spans residues 198–224 (YSLWNYSRQMRTMVGTREYSGHAHISA). A helical transmembrane segment spans residues 225-245 (MLSILSFLILYLSHYMVAVLI). Over 246–256 (STQVLYLGSRT) the chain is Extracellular. A helical membrane pass occupies residues 257–277 (FVFCLLVIGMYPSIHSIVLIL). Residues 278–335 (GNPKLKRNAKMFIVHCKCCHCTRAWVTSRSPRLSDLPVPPTHPSANKTSCSEACIMPS) are Cytoplasmic-facing. A disordered region spans residues 308–327 (PRLSDLPVPPTHPSANKTSC).

The protein belongs to the G-protein coupled receptor T2R family. Expressed in subsets of taste receptor cells of the tongue and palate epithelium and exclusively in gustducin-positive cells. Expressed in the duodenum, antrum and fundus (part of the stomach).

The protein resides in the membrane. Gustducin-coupled receptor implicated in the perception of bitter compounds in the oral cavity and the gastrointestinal tract. Signals through PLCB2 and the calcium-regulated cation channel TRPM5. The sequence is that of Taste receptor type 2 member 119 (Tas2r119) from Rattus norvegicus (Rat).